The following is a 393-amino-acid chain: Seven-bladed beta-propeller protein Rv1057 (393 aa).

Residues Asp208–Ala230 are disordered. Residues Ser214–Lys224 are compositionally biased toward basic residues.

Its function is as follows. May play an important role in host-pathogen interactions and in ESAT-6 secretion. This Mycobacterium tuberculosis (strain ATCC 25618 / H37Rv) protein is Seven-bladed beta-propeller protein Rv1057.